Consider the following 909-residue polypeptide: E3 ubiquitin-protein ligase HACE1 (909 aa).

Residues 1–21 (MERAMEQLNRLTRSLRRARTV) are N-terminal helix important for homodimerization. ANK repeat units follow at residues 23–55 (LPDDNETAVYTLMPMVMADQHRSVSELLSNSKF), 64–93 (VKRSLLHIAANCGSVECLVLLLKKGANPNY), 97–126 (SGCTPLHLAARNGQKKCMSKLLEYSADVNI), 130–159 (EGLTAIHWLAVNGRTELLHDLVQHVSDVDV), 163–192 (MGQTALHVACQNGHKTTVQCLLDSGADINR), 196–226 (SGATPLYFACSHGQRDTAQILLLRGAKYLSD), and 228–253 (NGVTPLDLCVQGGYGETCEVLIQYHP). Residues 396–433 (KGQDQDGTSIPPFEPPGPGSYENLSTGTGESKPDVLGG) are disordered. The HECT domain occupies 574-909 (NCAKLKQGIA…HCGSYGYTMA (336 aa)). The Glycyl thioester intermediate role is filled by Cys876.

Homodimer. The homodimer is autoinhibited and stabilized by its N-terminal helix. Interacts with RAB1 (RAB1A, RAB1B or RAB1C), RAB4 (RAB4A or RAB4B) and RAB11 (RAB11A or RAB11B); in a GTP-dependent manner. Interacts with the 26S proteasomal complex through the 20S core proteasomal subunit. Interacts with RARB. Autoubiquitinated.

It is found in the golgi apparatus. It localises to the golgi stack membrane. The protein localises to the cytoplasm. Its subcellular location is the endoplasmic reticulum. The catalysed reaction is S-ubiquitinyl-[E2 ubiquitin-conjugating enzyme]-L-cysteine + [acceptor protein]-L-lysine = [E2 ubiquitin-conjugating enzyme]-L-cysteine + N(6)-ubiquitinyl-[acceptor protein]-L-lysine.. It participates in protein modification; protein ubiquitination. E3 ubiquitin-protein ligase involved in Golgi membrane fusion and regulation of small GTPases. Acts as a regulator of Golgi membrane dynamics during the cell cycle: recruited to Golgi membrane by Rab proteins and regulates postmitotic Golgi membrane fusion. Acts by mediating ubiquitination during mitotic Golgi disassembly, ubiquitination serving as a signal for Golgi reassembly later, after cell division. Specifically binds GTP-bound RAC1, mediating ubiquitination and subsequent degradation of active RAC1, thereby playing a role in host defense against pathogens. May also act as a transcription regulator via its interaction with RARB. This Bos taurus (Bovine) protein is E3 ubiquitin-protein ligase HACE1 (HACE1).